We begin with the raw amino-acid sequence, 113 residues long: rRNA-processing protein cgrA (113 aa).

Residues 1-15 (MSTITTSSVASSNGM) are compositionally biased toward polar residues. Residues 1–113 (MSTITTSSVA…REKRNKLLHS (113 aa)) form a disordered region. Residues 37–100 (SYEKRLEARK…EKMHRKRVER (64 aa)) are a coiled coil. The segment covering 38–92 (YEKRLEARKLQEAVKEHEREMREEREAERKAQIQKIKDRRAAKEEKERYEKMAEK) has biased composition (basic and acidic residues). Basic residues predominate over residues 93–113 (MHRKRVERLKRREKRNKLLHS).

The protein belongs to the CGR1 family.

The protein resides in the nucleus. The protein localises to the nucleolus. Involved in nucleolar integrity and required for processing of the pre-rRNA for the 60S ribosome subunit. This is rRNA-processing protein cgrA (cgrA) from Aspergillus clavatus (strain ATCC 1007 / CBS 513.65 / DSM 816 / NCTC 3887 / NRRL 1 / QM 1276 / 107).